The sequence spans 177 residues: Large ribosomal subunit protein uL10 (177 aa).

The protein belongs to the universal ribosomal protein uL10 family. Part of the ribosomal stalk of the 50S ribosomal subunit. The N-terminus interacts with L11 and the large rRNA to form the base of the stalk. The C-terminus forms an elongated spine to which L12 dimers bind in a sequential fashion forming a multimeric L10(L12)X complex.

Forms part of the ribosomal stalk, playing a central role in the interaction of the ribosome with GTP-bound translation factors. In Xanthomonas oryzae pv. oryzae (strain MAFF 311018), this protein is Large ribosomal subunit protein uL10.